A 149-amino-acid chain; its full sequence is MRCPYCSYEESKVVDSRSAEDYNAIRRRRECLRCSKRYTTYEKVEDIPILVIKKDLSRESFNKEKIISGLIKACQKRPVSRAQIEEIAADIERNISNKMMVEIKSDYIGEMIMERLKDIDEVSYVRFASVYRQFKDINTFMEEIKSLMK.

The segment at 3 to 34 is a zinc-finger region; sequence CPYCSYEESKVVDSRSAEDYNAIRRRRECLRC. Residues 49–139 form the ATP-cone domain; sequence ILVIKKDLSR…VYRQFKDINT (91 aa).

This sequence belongs to the NrdR family. Zn(2+) serves as cofactor.

In terms of biological role, negatively regulates transcription of bacterial ribonucleotide reductase nrd genes and operons by binding to NrdR-boxes. This chain is Transcriptional repressor NrdR, found in Clostridium perfringens (strain ATCC 13124 / DSM 756 / JCM 1290 / NCIMB 6125 / NCTC 8237 / Type A).